Consider the following 281-residue polypeptide: INSIG family protein (281 aa).

The Cytoplasmic portion of the chain corresponds to 1-93 (MSRKEIYEPR…FIDYSSLITF (93 aa)). Ser28 carries the phosphoserine modification. Residues 94-120 (FCKLCVIFGLGFVFTYLAEQIVQDAKL) form a helical membrane-spanning segment. Over 121-134 (PLLTVNLKSWKFEP) the chain is Lumenal. A helical transmembrane segment spans residues 135–159 (PWPAIFGFVAVILGLSYRRMDTKYP). Over 160-170 (LGAAPLRPSQS) the chain is Cytoplasmic. The chain crosses the membrane as a helical span at residues 171-186 (SKWQWISRYLAAFATL). Topologically, residues 187 to 189 (LLS) are lumenal. Residues 190–215 (MKKLLFISNSHSIVALVASSASIWYI) form a helical membrane-spanning segment. The Cytoplasmic portion of the chain corresponds to 216-221 (FDRSRN). A helical membrane pass occupies residues 222 to 256 (GIILSTITSVLGSILYYNLVDTSKIELNGVEFPEI). At 257-260 (QFRL) the chain is on the lumenal side. Residues 261 to 281 (WIPMILFSASTIVGNAGRLLF) traverse the membrane as a helical segment.

Belongs to the INSIG family.

It is found in the endoplasmic reticulum membrane. The chain is INSIG family protein (ins1) from Schizosaccharomyces pombe (strain 972 / ATCC 24843) (Fission yeast).